The chain runs to 361 residues: 3-dehydroquinate synthase (361 aa).

Residues 69–74 (DGEEYK), 103–107 (GVIGD), 127–128 (TT), K140, K149, and 167–170 (TLDT) each bind NAD(+). Zn(2+) is bound by residues E182, H245, and H262.

The protein belongs to the sugar phosphate cyclases superfamily. Dehydroquinate synthase family. The cofactor is Co(2+). It depends on Zn(2+) as a cofactor. Requires NAD(+) as cofactor.

Its subcellular location is the cytoplasm. It carries out the reaction 7-phospho-2-dehydro-3-deoxy-D-arabino-heptonate = 3-dehydroquinate + phosphate. The protein operates within metabolic intermediate biosynthesis; chorismate biosynthesis; chorismate from D-erythrose 4-phosphate and phosphoenolpyruvate: step 2/7. Its function is as follows. Catalyzes the conversion of 3-deoxy-D-arabino-heptulosonate 7-phosphate (DAHP) to dehydroquinate (DHQ). The protein is 3-dehydroquinate synthase of Thioalkalivibrio sulfidiphilus (strain HL-EbGR7).